The following is a 126-amino-acid chain: Phosphoribosyl-AMP cyclohydrolase (126 aa).

Position 76 (Asp76) interacts with Mg(2+). Cys77 contributes to the Zn(2+) binding site. Mg(2+) contacts are provided by Asp78 and Asp80. Residues Cys94 and Cys101 each coordinate Zn(2+).

Belongs to the PRA-CH family. As to quaternary structure, homodimer. The cofactor is Mg(2+). Requires Zn(2+) as cofactor.

It is found in the cytoplasm. The catalysed reaction is 1-(5-phospho-beta-D-ribosyl)-5'-AMP + H2O = 1-(5-phospho-beta-D-ribosyl)-5-[(5-phospho-beta-D-ribosylamino)methylideneamino]imidazole-4-carboxamide. Its pathway is amino-acid biosynthesis; L-histidine biosynthesis; L-histidine from 5-phospho-alpha-D-ribose 1-diphosphate: step 3/9. Its function is as follows. Catalyzes the hydrolysis of the adenine ring of phosphoribosyl-AMP. This is Phosphoribosyl-AMP cyclohydrolase from Vesicomyosocius okutanii subsp. Calyptogena okutanii (strain HA).